We begin with the raw amino-acid sequence, 276 residues long: S-adenosylmethionine decarboxylase proenzyme (276 aa).

S124 (schiff-base intermediate with substrate; via pyruvic acid) is an active-site residue. Residue S124 is modified to Pyruvic acid (Ser); by autocatalysis. H129 serves as the catalytic Proton acceptor; for processing activity. C152 functions as the Proton donor; for catalytic activity in the catalytic mechanism.

The protein belongs to the prokaryotic AdoMetDC family. Type 2 subfamily. In terms of assembly, heterooctamer of four alpha and four beta chains arranged as a tetramer of alpha/beta heterodimers. It depends on pyruvate as a cofactor. Is synthesized initially as an inactive proenzyme. Formation of the active enzyme involves a self-maturation process in which the active site pyruvoyl group is generated from an internal serine residue via an autocatalytic post-translational modification. Two non-identical subunits are generated from the proenzyme in this reaction, and the pyruvate is formed at the N-terminus of the alpha chain, which is derived from the carboxyl end of the proenzyme. The post-translation cleavage follows an unusual pathway, termed non-hydrolytic serinolysis, in which the side chain hydroxyl group of the serine supplies its oxygen atom to form the C-terminus of the beta chain, while the remainder of the serine residue undergoes an oxidative deamination to produce ammonia and the pyruvoyl group blocking the N-terminus of the alpha chain.

It carries out the reaction S-adenosyl-L-methionine + H(+) = S-adenosyl 3-(methylsulfanyl)propylamine + CO2. Its pathway is amine and polyamine biosynthesis; S-adenosylmethioninamine biosynthesis; S-adenosylmethioninamine from S-adenosyl-L-methionine: step 1/1. Its function is as follows. Catalyzes the decarboxylation of S-adenosylmethionine to S-adenosylmethioninamine (dcAdoMet), the propylamine donor required for the synthesis of the polyamines spermine and spermidine from the diamine putrescine. The protein is S-adenosylmethionine decarboxylase proenzyme of Desulfitobacterium hafniense (strain Y51).